The following is a 445-amino-acid chain: Putative transcription factor bHLH056 (445 aa).

Disordered regions lie at residues 36-70 (NQTH…PPHL), 224-260 (QIQP…AEMH), and 365-445 (PFPN…QPTA). A compositionally biased stretch (basic and acidic residues) spans 231-246 (SKLKAREETHGTEEAR). The 50-residue stretch at 255–304 (RTAEMHNLAERRRREKINEKMKTLQQLIPRCNKSTKVSTLDDAIEYVKSL) folds into the bHLH domain. Positions 418 to 433 (QGQTTSQLSSGQASSS) are enriched in low complexity.

Homodimer.

It is found in the nucleus. The sequence is that of Putative transcription factor bHLH056 (BHLH56) from Arabidopsis thaliana (Mouse-ear cress).